A 204-amino-acid polypeptide reads, in one-letter code: Inactive ribonuclease-like protein 9 (204 aa).

A signal peptide spans 1-26; it reads MMRTLITTHPLLLLLLLQQLLQPVQF. 3 disulfide bridges follow: cysteine 97–cysteine 152, cysteine 115–cysteine 167, and cysteine 122–cysteine 129. 2 N-linked (GlcNAc...) asparagine glycosylation sites follow: asparagine 130 and asparagine 142.

This sequence belongs to the pancreatic ribonuclease family.

The protein resides in the secreted. Its function is as follows. Does not exhibit any ribonuclease activity. The polypeptide is Inactive ribonuclease-like protein 9 (RNASE9) (Papio anubis (Olive baboon)).